Consider the following 60-residue polypeptide: Large ribosomal subunit protein bL32 (60 aa).

Residues M1–R16 show a composition bias toward basic residues. A disordered region spans residues M1–A60. The span at R17–L44 shows a compositional bias: basic and acidic residues.

Belongs to the bacterial ribosomal protein bL32 family.

In Bradyrhizobium sp. (strain BTAi1 / ATCC BAA-1182), this protein is Large ribosomal subunit protein bL32.